The following is a 773-amino-acid chain: Cellobiose dehydrogenase (773 aa).

The signal sequence occupies residues 1–18 (MLGRSLLALLPFVGLAFS). Position 19 is a pyrrolidone carboxylic acid (Q19). The segment at 19-208 (QSASQFTDPT…YQNYLNGDSG (190 aa)) is heme domain. Heme-binding residues include M83 and H181. A disordered region spans residues 203–227 (LNGDSGNPTTTSTKPTSTSSSVTTG). Over residues 210–227 (PTTTSTKPTSTSSSVTTG) the composition is skewed to low complexity. The oxidoreductase stretch occupies residues 235-773 (YDYIIVGAGP…AKILALAGGP (539 aa)). FAD is bound at residue 236–265 (DYIIVGAGPGGIIAADRLSEAGKKVLLLER). Catalysis depends on H707, which acts as the Proton acceptor.

It in the C-terminal section; belongs to the GMC oxidoreductase family. Requires FAD as cofactor. Heme is required as a cofactor.

It localises to the secreted. The catalysed reaction is D-cellobiose + A = D-cellobiono-1,5-lactone + AH2. Degrades both lignin and cellulose. Oxidizes cellobiose to cellobionolactone. In Phanerodontia chrysosporium (White-rot fungus), this protein is Cellobiose dehydrogenase (CDH-1).